Reading from the N-terminus, the 392-residue chain is Formate-dependent phosphoribosylglycinamide formyltransferase (392 aa).

Residues glutamate 22–leucine 23 and glutamate 82 each bind N(1)-(5-phospho-beta-D-ribosyl)glycinamide. Residues arginine 114, lysine 155, serine 160 to glutamine 165, glutamate 195 to valine 198, and glutamate 203 contribute to the ATP site. In terms of domain architecture, ATP-grasp spans arginine 119–leucine 308. Mg(2+) is bound by residues glutamate 267 and glutamate 279. N(1)-(5-phospho-beta-D-ribosyl)glycinamide-binding positions include aspartate 286, lysine 355, and arginine 362–arginine 363.

This sequence belongs to the PurK/PurT family. As to quaternary structure, homodimer.

The enzyme catalyses N(1)-(5-phospho-beta-D-ribosyl)glycinamide + formate + ATP = N(2)-formyl-N(1)-(5-phospho-beta-D-ribosyl)glycinamide + ADP + phosphate + H(+). It functions in the pathway purine metabolism; IMP biosynthesis via de novo pathway; N(2)-formyl-N(1)-(5-phospho-D-ribosyl)glycinamide from N(1)-(5-phospho-D-ribosyl)glycinamide (formate route): step 1/1. Its function is as follows. Involved in the de novo purine biosynthesis. Catalyzes the transfer of formate to 5-phospho-ribosyl-glycinamide (GAR), producing 5-phospho-ribosyl-N-formylglycinamide (FGAR). Formate is provided by PurU via hydrolysis of 10-formyl-tetrahydrofolate. The sequence is that of Formate-dependent phosphoribosylglycinamide formyltransferase from Salmonella schwarzengrund (strain CVM19633).